Here is a 652-residue protein sequence, read N- to C-terminus: UvrABC system protein C (652 aa).

Residues 37-116 (KSSGCYLFKD…IKTNKPYFNI (80 aa)) enclose the GIY-YIG domain. Residues 226-261 (DDLEIFLQKKMLQFSNDLDYENAAKIRDQISGLKLL) form the UVR domain.

It belongs to the UvrC family. In terms of assembly, interacts with UvrB in an incision complex.

The protein resides in the cytoplasm. Its function is as follows. The UvrABC repair system catalyzes the recognition and processing of DNA lesions. UvrC both incises the 5' and 3' sides of the lesion. The N-terminal half is responsible for the 3' incision and the C-terminal half is responsible for the 5' incision. The chain is UvrABC system protein C from Prochlorococcus marinus (strain MIT 9312).